Here is a 161-residue protein sequence, read N- to C-terminus: DNA-directed RNA polymerase 19 kDa subunit (161 aa).

Residues 1-32 (MADTDDIIDYESDDLTEYEDDEEDGESLETSD) are compositionally biased toward acidic residues. Positions 1 to 35 (MADTDDIIDYESDDLTEYEDDEEDGESLETSDIDP) are disordered.

This sequence belongs to the poxviridae DNA-directed RNA polymerase 19 kDa subunit family. The DNA-dependent RNA polymerase used for intermediate and late genes expression consists of eight subunits Rpo30/OPG66, Rpo7/OPG90, Rpo22/OPG103, Rpo147/OPG105, Rpo18/OPG119, Rpo19/OPG131, Rpo132/OPG151 and Rpo35/OPG156. The same holoenzyme, with the addition of the transcription-specificity factor OPG109, is used for early gene expression.

It is found in the virion. It carries out the reaction RNA(n) + a ribonucleoside 5'-triphosphate = RNA(n+1) + diphosphate. Its function is as follows. Part of the DNA-dependent RNA polymerase which catalyzes the transcription of viral DNA into RNA using the four ribonucleoside triphosphates as substrates. Responsible for the transcription of early, intermediate and late genes. DNA-dependent RNA polymerase associates with the early transcription factor (ETF), itself composed of OPG118 and OPG133, thereby allowing the early genes transcription. Late transcription, and probably also intermediate transcription, require newly synthesized RNA polymerase. The sequence is that of DNA-directed RNA polymerase 19 kDa subunit (OPG131) from Monkeypox virus.